Here is a 510-residue protein sequence, read N- to C-terminus: D-alanine--D-alanyl carrier protein ligase (510 aa).

Residue 157-158 (TS) coordinates ATP. Aspartate 202 contributes to the D-alanine binding site. Residue 297–302 (NTYGPT) coordinates ATP. D-alanine is bound at residue valine 306. The ATP site is built by aspartate 389 and lysine 498. Lysine 498 provides a ligand contact to D-alanine.

Belongs to the ATP-dependent AMP-binding enzyme family. DltA subfamily.

The protein resides in the cytoplasm. The enzyme catalyses holo-[D-alanyl-carrier protein] + D-alanine + ATP = D-alanyl-[D-alanyl-carrier protein] + AMP + diphosphate. The protein operates within cell wall biogenesis; lipoteichoic acid biosynthesis. Functionally, catalyzes the first step in the D-alanylation of lipoteichoic acid (LTA), the activation of D-alanine and its transfer onto the D-alanyl carrier protein (Dcp) DltC. In an ATP-dependent two-step reaction, forms a high energy D-alanyl-AMP intermediate, followed by transfer of the D-alanyl residue as a thiol ester to the phosphopantheinyl prosthetic group of the Dcp. D-alanylation of LTA plays an important role in modulating the properties of the cell wall in Gram-positive bacteria, influencing the net charge of the cell wall. This Listeria innocua serovar 6a (strain ATCC BAA-680 / CLIP 11262) protein is D-alanine--D-alanyl carrier protein ligase.